A 495-amino-acid chain; its full sequence is Aspartyl/glutamyl-tRNA(Asn/Gln) amidotransferase subunit B (495 aa).

The protein belongs to the GatB/GatE family. GatB subfamily. As to quaternary structure, heterotrimer of A, B and C subunits.

It catalyses the reaction L-glutamyl-tRNA(Gln) + L-glutamine + ATP + H2O = L-glutaminyl-tRNA(Gln) + L-glutamate + ADP + phosphate + H(+). The catalysed reaction is L-aspartyl-tRNA(Asn) + L-glutamine + ATP + H2O = L-asparaginyl-tRNA(Asn) + L-glutamate + ADP + phosphate + 2 H(+). Allows the formation of correctly charged Asn-tRNA(Asn) or Gln-tRNA(Gln) through the transamidation of misacylated Asp-tRNA(Asn) or Glu-tRNA(Gln) in organisms which lack either or both of asparaginyl-tRNA or glutaminyl-tRNA synthetases. The reaction takes place in the presence of glutamine and ATP through an activated phospho-Asp-tRNA(Asn) or phospho-Glu-tRNA(Gln). This chain is Aspartyl/glutamyl-tRNA(Asn/Gln) amidotransferase subunit B, found in Methanosarcina mazei (strain ATCC BAA-159 / DSM 3647 / Goe1 / Go1 / JCM 11833 / OCM 88) (Methanosarcina frisia).